The sequence spans 231 residues: UPF0758 protein pc1765 (231 aa).

The 123-residue stretch at 107-229 folds into the MPN domain; it reads LIEHSSHAYQ…YVSFKDQNLL (123 aa). Zn(2+) is bound by residues His-178, His-180, and Asp-191. The JAMM motif motif lies at 178-191; the sequence is HNHPSGDPMPSNQD.

The protein belongs to the UPF0758 family.

The polypeptide is UPF0758 protein pc1765 (Protochlamydia amoebophila (strain UWE25)).